A 448-amino-acid polypeptide reads, in one-letter code: Homogentisate 1,2-dioxygenase (448 aa).

His-303 acts as the Proton acceptor in catalysis. Fe cation-binding residues include His-346 and Glu-352. The homogentisate site is built by Tyr-361 and His-382. His-382 lines the Fe cation pocket.

It belongs to the homogentisate dioxygenase family. In terms of assembly, hexamer; dimer of trimers. The cofactor is Fe cation.

The catalysed reaction is homogentisate + O2 = 4-maleylacetoacetate + H(+). It participates in amino-acid degradation; L-phenylalanine degradation; acetoacetate and fumarate from L-phenylalanine: step 4/6. In terms of biological role, involved in the catabolism of homogentisate (2,5-dihydroxyphenylacetate or 2,5-OH-PhAc), a central intermediate in the degradation of phenylalanine and tyrosine. Catalyzes the oxidative ring cleavage of the aromatic ring of homogentisate to yield maleylacetoacetate. The protein is Homogentisate 1,2-dioxygenase of Rhodopseudomonas palustris (strain BisB5).